Here is a 1189-residue protein sequence, read N- to C-terminus: Structural maintenance of chromosomes protein 2 (1189 aa).

Residue 32-39 (GLNGSGKS) participates in ATP binding. Residues 211–503 (KEARASYLEY…ELCESIEAKH (293 aa)) adopt a coiled-coil conformation. Residues 522–639 (VKGLVVTLIT…CSSMDNAKKV (118 aa)) enclose the SMC hinge domain. Residues 674-1030 (ILSKLKTMRD…ELDRKKNKAL (357 aa)) adopt a coiled-coil conformation. 2 stretches are compositionally biased toward basic and acidic residues: residues 782 to 792 (NAEAERGKEIK) and 803 to 814 (KKADDSSRKMKE). 2 disordered regions span residues 782–814 (NAEAERGKEIKNAQQKLNSAKKKADDSSRKMKE) and 867–886 (SLKNAENELSSEKGLMEERT).

It belongs to the SMC family. SMC2 subfamily. In terms of assembly, forms a heterodimer with SMC4. Component of the condensin complex, which contains the SMC2 and SMC4 heterodimer, and probably some non SMC subunits that regulate the complex.

The protein resides in the nucleus. The protein localises to the cytoplasm. It is found in the chromosome. In terms of biological role, central component of the condensin complex, a complex required for conversion of interphase chromatin into mitotic-like condense chromosomes. The condensin complex probably introduces positive supercoils into relaxed DNA in the presence of type I topoisomerases and converts nicked DNA into positive knotted forms in the presence of type II topoisomerases. The protein is Structural maintenance of chromosomes protein 2 (SMC2) of Gallus gallus (Chicken).